The chain runs to 119 residues: Protein FAM24A-like (119 aa).

A signal peptide spans 1 to 40 (MYKPFDLRTIITIIIGCGILTAMFLLIGLVLCLYSKISKA).

This sequence belongs to the FAM24 family.

The protein resides in the secreted. This Mus musculus (Mouse) protein is Protein FAM24A-like.